The primary structure comprises 256 residues: Trypsin CFT-1 (256 aa).

Positions 1 to 17 (MRVTLALVALCLASVAA) are cleaved as a signal peptide. Residues 18 to 24 (LPEKQQR) constitute a propeptide, activation peptide. The region spanning 25–256 (IVGGSVTTIE…RFTAWIQANA (232 aa)) is the Peptidase S1 domain. Cys-55 and Cys-71 are oxidised to a cystine. Residues His-70 and Asp-115 each act as charge relay system in the active site. 2 disulfide bridges follow: Cys-180/Cys-197 and Cys-209/Cys-233. Ser-213 (charge relay system) is an active-site residue.

The protein belongs to the peptidase S1 family.

It is found in the secreted. The protein resides in the extracellular space. It catalyses the reaction Preferential cleavage: Arg-|-Xaa, Lys-|-Xaa.. Responsible for the activation of delta-endotoxin from Bacillus thuringiensis. In Choristoneura fumiferana (Spruce budworm moth), this protein is Trypsin CFT-1.